A 392-amino-acid chain; its full sequence is Leucine aminopeptidase 1 (392 aa).

Positions 1–18 are cleaved as a signal peptide; sequence MKFSQASLLAACLPAISA. The propeptide occupies 19 to 82; the sequence is RFIETAEADN…LGSTRLNAQT (64 aa). N-linked (GlcNAc...) asparagine glycosylation occurs at Asn174. Zn(2+) contacts are provided by His182, Asp201, Glu240, and Asp267. Cys316 and Cys320 are joined by a disulfide. Zn(2+) is bound at residue His349.

This sequence belongs to the peptidase M28 family. M28E subfamily. As to quaternary structure, monomer. Requires Zn(2+) as cofactor.

It localises to the secreted. In terms of biological role, extracellular aminopeptidase that allows assimilation of proteinaceous substrates. This Fusarium vanettenii (strain ATCC MYA-4622 / CBS 123669 / FGSC 9596 / NRRL 45880 / 77-13-4) (Fusarium solani subsp. pisi) protein is Leucine aminopeptidase 1 (LAP1).